The primary structure comprises 326 residues: Flotillin-like protein FloA (326 aa).

A helical transmembrane segment spans residues 3-23 (FTTIVVILLVIACIVVLFFIG).

Belongs to the flotillin-like FloA family. In terms of assembly, homooligomerizes.

It is found in the cell membrane. Its subcellular location is the membrane raft. Its function is as follows. Found in functional membrane microdomains (FMM) that may be equivalent to eukaryotic membrane rafts. FMMs are highly dynamic and increase in number as cells age. Flotillins are thought to be important factors in membrane fluidity. The polypeptide is Flotillin-like protein FloA (Desulforapulum autotrophicum (strain ATCC 43914 / DSM 3382 / VKM B-1955 / HRM2) (Desulfobacterium autotrophicum)).